Here is a 141-residue protein sequence, read N- to C-terminus: Nucleoside triphosphatase NudI (141 aa).

A Nudix hydrolase domain is found at 1–141 (MRQRTIVCPL…RKTLRLKGLL (141 aa)). A Nudix box motif is present at residues 38-59 (GGVEPGERIEEALRREIREELG).

It belongs to the Nudix hydrolase family. NudI subfamily. Monomer. Mg(2+) is required as a cofactor.

It carries out the reaction a ribonucleoside 5'-triphosphate + H2O = a ribonucleoside 5'-phosphate + diphosphate + H(+). It catalyses the reaction a 2'-deoxyribonucleoside 5'-triphosphate + H2O = a 2'-deoxyribonucleoside 5'-phosphate + diphosphate + H(+). The enzyme catalyses dUTP + H2O = dUMP + diphosphate + H(+). The catalysed reaction is dTTP + H2O = dTMP + diphosphate + H(+). It carries out the reaction dCTP + H2O = dCMP + diphosphate + H(+). Catalyzes the hydrolysis of nucleoside triphosphates, with a preference for pyrimidine deoxynucleoside triphosphates (dUTP, dTTP and dCTP). The polypeptide is Nucleoside triphosphatase NudI (Escherichia coli (strain ATCC 8739 / DSM 1576 / NBRC 3972 / NCIMB 8545 / WDCM 00012 / Crooks)).